Consider the following 103-residue polypeptide: Large ribosomal subunit protein bL21 (103 aa).

This sequence belongs to the bacterial ribosomal protein bL21 family. In terms of assembly, part of the 50S ribosomal subunit. Contacts protein L20.

Its function is as follows. This protein binds to 23S rRNA in the presence of protein L20. This is Large ribosomal subunit protein bL21 from Serratia proteamaculans (strain 568).